Consider the following 870-residue polypeptide: NEDD4-like E3 ubiquitin-protein ligase WWP2 (870 aa).

The C2 domain occupies 1-117 (MASASSSRAG…KNNGGKMENT (117 aa)). Positions 150–300 (SVPNGSAVTD…QLPAAAQAPD (151 aa)) are disordered. A compositionally biased stretch (polar residues) spans 152–171 (PNGSAVTDGSQPPSRESSGT). Low complexity predominate over residues 198 to 208 (GGSARTATAAS). Ser-211 is subject to Phosphoserine. Composition is skewed to polar residues over residues 222-235 (VKNSSSSGLANGTV) and 262-289 (SVSSNPNTTSLPAQSTPAEGEEASTSGT). The segment covering 290 to 300 (QQLPAAAQAPD) has biased composition (low complexity). WW domains follow at residues 300-333 (DALPAGWEQRELPNGRVYYVDHNTKTTTWERPLP), 330-363 (RPLPPGWEKRTDPRGRFYYVDHNTRTTTWQRPTA), 405-437 (GPLPPGWEKRQDNGRVYYVNHNTRTTQWEDPRT), and 444-477 (PALPPGWEMKYTSEGVRYFVDHNTRTTTFKDPRP). Residues 536 to 870 (KPYDLRRRLY…IEETEGFGQE (335 aa)) form the HECT domain. The active-site Glycyl thioester intermediate is Cys-838.

Interacts with SCNN1A, SCNN1B, SCNN1G, WBP1, WBP2 and ATN1. Interacts with ERBB4, NDFIP1 and NDFIP2. Interacts with ARRDC4. Interacts with POU5F1, RBP1, EGR2 and SLC11A2. Interacts (via WW domains) with ARRDC1 (via PPxY motifs); ubiquitinates ARRDC1. Interacts (via WW domains) with ARRDC2 and ARRDC3. In terms of processing, autoubiquitinated. Ubiquitinated by the SCF(FBXL15) complex, leading to its degradation by the proteasome.

It is found in the nucleus. The catalysed reaction is S-ubiquitinyl-[E2 ubiquitin-conjugating enzyme]-L-cysteine + [acceptor protein]-L-lysine = [E2 ubiquitin-conjugating enzyme]-L-cysteine + N(6)-ubiquitinyl-[acceptor protein]-L-lysine.. It functions in the pathway protein modification; protein ubiquitination. With respect to regulation, activated by NDFIP1- and NDFIP2-binding. In terms of biological role, E3 ubiquitin-protein ligase which accepts ubiquitin from an E2 ubiquitin-conjugating enzyme in the form of a thioester and then directly transfers the ubiquitin to targeted substrates. Polyubiquitinates POU5F1 by 'Lys-63'-linked conjugation and promotes it to proteasomal degradation; regulates POU5F1 protein level during differentiation of embryonal carcinoma cells (ECCs) but not in undifferentiated ECCs and embryonic stem cells (ESCs). Ubiquitinates EGR2 and promotes it to proteasomal degradation; in T-cells the ubiquitination inhibits activation-induced cell death. Ubiquitinates SLC11A2; the ubiquitination is enhanced by presence of NDFIP1 and NDFIP2. Ubiquitinates RPB1 and promotes it to proteasomal degradation. This is NEDD4-like E3 ubiquitin-protein ligase WWP2 (Wwp2) from Mus musculus (Mouse).